Consider the following 522-residue polypeptide: WEB family protein At2g38370 (522 aa).

Residues 1 to 32 (MAEFPEPGTVNPDSDLSNGRAEKPEIDTSAPF) form a disordered region. 2 coiled-coil regions span residues 77–264 (ELQR…AARE) and 299–376 (ARSA…RSEN). Disordered regions lie at residues 374-397 (SENG…SRRE) and 458-493 (MSLG…RKRK). Positions 473 to 486 (TVSKRSEGKENEKR) are enriched in basic and acidic residues.

Belongs to the WEB family.

This chain is WEB family protein At2g38370, found in Arabidopsis thaliana (Mouse-ear cress).